The chain runs to 223 residues: Phosphoribosylformylglycinamidine synthase subunit PurQ (223 aa).

The Glutamine amidotransferase type-1 domain occupies 3-223 (FAVLVFPGSN…MVKSWREQHV (221 aa)). Catalysis depends on C85, which acts as the Nucleophile. Active-site residues include H193 and E195.

In terms of assembly, part of the FGAM synthase complex composed of 1 PurL, 1 PurQ and 2 PurS subunits.

It localises to the cytoplasm. It catalyses the reaction N(2)-formyl-N(1)-(5-phospho-beta-D-ribosyl)glycinamide + L-glutamine + ATP + H2O = 2-formamido-N(1)-(5-O-phospho-beta-D-ribosyl)acetamidine + L-glutamate + ADP + phosphate + H(+). The catalysed reaction is L-glutamine + H2O = L-glutamate + NH4(+). The protein operates within purine metabolism; IMP biosynthesis via de novo pathway; 5-amino-1-(5-phospho-D-ribosyl)imidazole from N(2)-formyl-N(1)-(5-phospho-D-ribosyl)glycinamide: step 1/2. In terms of biological role, part of the phosphoribosylformylglycinamidine synthase complex involved in the purines biosynthetic pathway. Catalyzes the ATP-dependent conversion of formylglycinamide ribonucleotide (FGAR) and glutamine to yield formylglycinamidine ribonucleotide (FGAM) and glutamate. The FGAM synthase complex is composed of three subunits. PurQ produces an ammonia molecule by converting glutamine to glutamate. PurL transfers the ammonia molecule to FGAR to form FGAM in an ATP-dependent manner. PurS interacts with PurQ and PurL and is thought to assist in the transfer of the ammonia molecule from PurQ to PurL. In Staphylococcus aureus (strain bovine RF122 / ET3-1), this protein is Phosphoribosylformylglycinamidine synthase subunit PurQ.